Consider the following 450-residue polypeptide: tRNA-2-methylthio-N(6)-dimethylallyladenosine synthase (450 aa).

The MTTase N-terminal domain occupies 14-132; it reads GEFFIETWGC…FPNYLNEVKK (119 aa). Cysteine 23, cysteine 59, cysteine 93, cysteine 169, cysteine 173, and cysteine 176 together coordinate [4Fe-4S] cluster. The region spanning 155–385 is the Radical SAM core domain; it reads RKNSMKAFVT…VEVLNEISAK (231 aa). One can recognise a TRAM domain in the interval 388 to 450; that stretch reads KAYEGKIEEV…NSFSLTGEEI (63 aa).

This sequence belongs to the methylthiotransferase family. MiaB subfamily. Monomer. Requires [4Fe-4S] cluster as cofactor.

It localises to the cytoplasm. The enzyme catalyses N(6)-dimethylallyladenosine(37) in tRNA + (sulfur carrier)-SH + AH2 + 2 S-adenosyl-L-methionine = 2-methylsulfanyl-N(6)-dimethylallyladenosine(37) in tRNA + (sulfur carrier)-H + 5'-deoxyadenosine + L-methionine + A + S-adenosyl-L-homocysteine + 2 H(+). Its function is as follows. Catalyzes the methylthiolation of N6-(dimethylallyl)adenosine (i(6)A), leading to the formation of 2-methylthio-N6-(dimethylallyl)adenosine (ms(2)i(6)A) at position 37 in tRNAs that read codons beginning with uridine. In Clostridium botulinum (strain ATCC 19397 / Type A), this protein is tRNA-2-methylthio-N(6)-dimethylallyladenosine synthase.